The primary structure comprises 990 residues: Aconitate hydratase 3, mitochondrial (990 aa).

The transit peptide at 1–78 (MYLTASSSAS…PFRFTSQIRA (78 aa)) directs the protein to the mitochondrion. The residue at position 91 (serine 91) is a Phosphoserine. Substrate is bound by residues glutamine 182 and 301–303 (DSH). Cysteine 533, cysteine 599, and cysteine 602 together coordinate [4Fe-4S] cluster. Residues arginine 632, arginine 637, arginine 795, and 876 to 877 (SR) each bind substrate.

Belongs to the aconitase/IPM isomerase family. In terms of assembly, monomer. Interacts with B'GAMMA in the cytosol. Requires [4Fe-4S] cluster as cofactor. Phosphorylated at Ser-91 in the cytoplasm; this phosphorylation requires the presence of B'GAMMA. As to expression, major aconitase isoenzyme in young seedlings. Expressed in roots, leaves, stems and flowers, and, at low levels, in seeds.

Its subcellular location is the mitochondrion. The protein localises to the cytoplasm. The enzyme catalyses citrate = D-threo-isocitrate. It participates in carbohydrate metabolism; tricarboxylic acid cycle; isocitrate from oxaloacetate: step 2/2. Its function is as follows. Catalyzes the isomerization of citrate to isocitrate via cis-aconitate. Contributes to oxidative stress tolerance. Modulates cytosolic citrate metabolism during lipid mobilization. Required during seedling growth. The polypeptide is Aconitate hydratase 3, mitochondrial (Arabidopsis thaliana (Mouse-ear cress)).